A 757-amino-acid chain; its full sequence is Protein lsd90 (757 aa).

Polar residues-rich tracts occupy residues 1 to 11 (MVGTINESMQN), 19 to 36 (TAQS…SSSK), 51 to 69 (TAGN…SKNL), and 94 to 118 (DTSN…STYE). Disordered regions lie at residues 1 to 131 (MVGT…SRSS), 224 to 244 (ERAR…EKQA), 589 to 633 (AQAE…KSKS), and 657 to 757 (AYVG…MSNK). A coiled-coil region spans residues 166-604 (DEKTLQDLLE…KVESEYNSVK (439 aa)). The segment covering 589–598 (AQAEQSKVES) has biased composition (basic and acidic residues). Residues 619 to 632 (VTTNEPTDVSTKSK) show a composition bias toward polar residues. Residues 674–693 (STPSTLPTSASTNAAATTTT) show a composition bias toward low complexity. 718–725 (GTTGLGKS) serves as a coordination point for ATP.

May be involved in the metabolism of very long-chain fatty acid-containing phospholipids (VLCFA-PL). The protein is Protein lsd90 (lsd90) of Schizosaccharomyces pombe (strain 972 / ATCC 24843) (Fission yeast).